We begin with the raw amino-acid sequence, 454 residues long: tRNA(Ile)-lysidine synthase (454 aa).

31-36 contributes to the ATP binding site; the sequence is SGGADS.

This sequence belongs to the tRNA(Ile)-lysidine synthase family.

It localises to the cytoplasm. It catalyses the reaction cytidine(34) in tRNA(Ile2) + L-lysine + ATP = lysidine(34) in tRNA(Ile2) + AMP + diphosphate + H(+). Its function is as follows. Ligates lysine onto the cytidine present at position 34 of the AUA codon-specific tRNA(Ile) that contains the anticodon CAU, in an ATP-dependent manner. Cytidine is converted to lysidine, thus changing the amino acid specificity of the tRNA from methionine to isoleucine. This chain is tRNA(Ile)-lysidine synthase, found in Porphyromonas gingivalis (strain ATCC BAA-308 / W83).